A 257-amino-acid chain; its full sequence is Type III pantothenate kinase (257 aa).

Residue 6–13 (DVGNTSTK) participates in ATP binding. A substrate-binding site is contributed by 109 to 112 (GADR). Asp-111 functions as the Proton acceptor in the catalytic mechanism. Asp-132 lines the K(+) pocket. Thr-135 serves as a coordination point for ATP. Thr-187 contributes to the substrate binding site.

Belongs to the type III pantothenate kinase family. Homodimer. The cofactor is NH4(+). K(+) serves as cofactor.

The protein localises to the cytoplasm. The catalysed reaction is (R)-pantothenate + ATP = (R)-4'-phosphopantothenate + ADP + H(+). It participates in cofactor biosynthesis; coenzyme A biosynthesis; CoA from (R)-pantothenate: step 1/5. Its function is as follows. Catalyzes the phosphorylation of pantothenate (Pan), the first step in CoA biosynthesis. The protein is Type III pantothenate kinase of Anaplasma marginale (strain St. Maries).